Reading from the N-terminus, the 348-residue chain is MALTVDVVGPAPWGFRISGGRDFHTPIMVTKVTERGKAEAADLRPGDIIVSINGESAKDMLHAEAQSKIRQSPSPLRLQLDRPQAASPGQANGESSLEVLATRFQSSRRTHTDSQASLSPRPCSPFFTLPPTSPQAPTGEVVTSHSFQSLAYSLEPASADHLYYGGRRGSRQASLSPAGDSAVLVLPPPPSPGARSSSSRLSVVSEGESHLLREDSEVFKMLQENREARMAPRQSSSFRLLQEALEAEERGGTPAYLPSSLSPQSSLPTSRALASPPKLHTCEKCNTSIANQAVRIQEGRYRHPGCYTCADCGLNLKMRGHFWVGDELYCEKHARQRYSAPPTLNSQA.

Residues 1-84 (MALTVDVVGP…PLRLQLDRPQ (84 aa)) enclose the PDZ domain. A disordered region spans residues 67–139 (SKIRQSPSPL…PPTSPQAPTG (73 aa)). A compositionally biased stretch (polar residues) spans 103–118 (RFQSSRRTHTDSQASL). A phosphoserine mark is found at Ser117, Ser119, and Ser124. Residues Thr128 and Thr132 each carry the phosphothreonine modification. Phosphoserine is present on residues Ser133, Ser153, Ser191, Ser197, Ser198, Ser202, Ser209, and Ser262. Positions 165 to 202 (GGRRGSRQASLSPAGDSAVLVLPPPPSPGARSSSSRLS) are disordered. Low complexity predominate over residues 193-202 (GARSSSSRLS). A disordered region spans residues 249 to 275 (ERGGTPAYLPSSLSPQSSLPTSRALAS). Positions 257-270 (LPSSLSPQSSLPTS) are enriched in low complexity. Residues 280 to 340 (HTCEKCNTSI…EKHARQRYSA (61 aa)) form the LIM zinc-binding domain.

In terms of assembly, interacts with alpha-actinins ACTN1 and ACTN4, FLNA and MYH9. Interacts (via LIM zinc-binding domain) with MKRN2.

The protein localises to the cytoplasm. Its subcellular location is the cytoskeleton. Its function is as follows. Probable adapter protein located at the actin cytoskeleton that promotes cell attachment. Necessary for the migratory capacity of epithelial cells. Overexpression enhances cell adhesion to collagen and fibronectin and suppresses anchorage independent growth. May contribute to tumor cell migratory capacity. The sequence is that of PDZ and LIM domain protein 2 (PDLIM2) from Bos taurus (Bovine).